We begin with the raw amino-acid sequence, 340 residues long: Biotin synthase (340 aa).

Positions 47 to 269 (SELQLSQLLS…VAVARIVCPK (223 aa)) constitute a Radical SAM core domain. Residues cysteine 62, cysteine 66, and cysteine 69 each contribute to the [4Fe-4S] cluster site. The [2Fe-2S] cluster site is built by cysteine 106, cysteine 137, cysteine 197, and arginine 273.

It belongs to the radical SAM superfamily. Biotin synthase family. In terms of assembly, homodimer. [4Fe-4S] cluster serves as cofactor. Requires [2Fe-2S] cluster as cofactor.

It catalyses the reaction (4R,5S)-dethiobiotin + (sulfur carrier)-SH + 2 reduced [2Fe-2S]-[ferredoxin] + 2 S-adenosyl-L-methionine = (sulfur carrier)-H + biotin + 2 5'-deoxyadenosine + 2 L-methionine + 2 oxidized [2Fe-2S]-[ferredoxin]. The protein operates within cofactor biosynthesis; biotin biosynthesis; biotin from 7,8-diaminononanoate: step 2/2. In terms of biological role, catalyzes the conversion of dethiobiotin (DTB) to biotin by the insertion of a sulfur atom into dethiobiotin via a radical-based mechanism. This chain is Biotin synthase, found in Caulobacter sp. (strain K31).